Reading from the N-terminus, the 292-residue chain is Elongation factor Ts (292 aa).

The involved in Mg(2+) ion dislocation from EF-Tu stretch occupies residues T79–V82.

This sequence belongs to the EF-Ts family.

The protein resides in the cytoplasm. In terms of biological role, associates with the EF-Tu.GDP complex and induces the exchange of GDP to GTP. It remains bound to the aminoacyl-tRNA.EF-Tu.GTP complex up to the GTP hydrolysis stage on the ribosome. The sequence is that of Elongation factor Ts from Xanthomonas euvesicatoria pv. vesicatoria (strain 85-10) (Xanthomonas campestris pv. vesicatoria).